Reading from the N-terminus, the 164-residue chain is Xanthine-guanine phosphoribosyltransferase (164 aa).

Residues 41–42 (RG) and 98–106 (DDLTDTGKT) contribute to the 5-phospho-alpha-D-ribose 1-diphosphate site. Residue Asp-99 coordinates Mg(2+). Residues Asp-102 and Ile-145 each contribute to the guanine site. Residues Asp-102 and Ile-145 each contribute to the xanthine site. GMP is bound by residues 102–106 (DTGKT) and 144–145 (WI).

This sequence belongs to the purine/pyrimidine phosphoribosyltransferase family. XGPT subfamily. Homotetramer. Mg(2+) is required as a cofactor.

The protein localises to the cell inner membrane. The catalysed reaction is GMP + diphosphate = guanine + 5-phospho-alpha-D-ribose 1-diphosphate. It carries out the reaction XMP + diphosphate = xanthine + 5-phospho-alpha-D-ribose 1-diphosphate. It catalyses the reaction IMP + diphosphate = hypoxanthine + 5-phospho-alpha-D-ribose 1-diphosphate. The protein operates within purine metabolism; GMP biosynthesis via salvage pathway; GMP from guanine: step 1/1. It participates in purine metabolism; XMP biosynthesis via salvage pathway; XMP from xanthine: step 1/1. Its function is as follows. Purine salvage pathway enzyme that catalyzes the transfer of the ribosyl-5-phosphate group from 5-phospho-alpha-D-ribose 1-diphosphate (PRPP) to the N9 position of the 6-oxopurines guanine and xanthine to form the corresponding ribonucleotides GMP (guanosine 5'-monophosphate) and XMP (xanthosine 5'-monophosphate), with the release of PPi. To a lesser extent, also acts on hypoxanthine. In Rhizobium johnstonii (strain DSM 114642 / LMG 32736 / 3841) (Rhizobium leguminosarum bv. viciae), this protein is Xanthine-guanine phosphoribosyltransferase.